The primary structure comprises 556 residues: Genetic interactor of prohibitins 3, mitochondrial (556 aa).

A mitochondrion-targeting transit peptide spans 1–21 (MLNLCHALRGVRQFSCSVIVK). The 193-residue stretch at 113–305 (ESTLNDILNY…LFDLPGYSTS (193 aa)) folds into the CP-type G domain.

This sequence belongs to the TRAFAC class YlqF/YawG GTPase family. GEP3 subfamily.

The protein resides in the mitochondrion. Its function is as follows. Interacts genetically with prohibitins and thus may be involved in the mitochondrial lipid metabolism. This Saccharomyces cerevisiae (strain AWRI1631) (Baker's yeast) protein is Genetic interactor of prohibitins 3, mitochondrial (GEP3).